Reading from the N-terminus, the 220-residue chain is Ras-related protein Rab-3A (220 aa).

The GTP site is built by Ser31, Ser32, Val33, Gly34, Lys35, Thr36, Ser37, Thr48, Pro49, Ser53, and Thr54. Position 36 (Thr36) interacts with Mg(2+). The Switch 1 signature appears at 49–58; sequence PAFVSTVGID. Residues Thr54 and Asp77 each coordinate Mg(2+). Residue Gly80 coordinates GTP. The short motif at 80 to 96 is the Switch 2 element; it reads GQERYRTITTAYYRGAM. Residue Thr86 is modified to Phosphothreonine. GTP-binding residues include Asn135, Lys136, Asp138, Ala166, and Lys167. Residues Ser188 and Ser190 each carry the phosphoserine modification. The disordered stretch occupies residues 194 to 220; that stretch reads ADPAVTGAKQGPQLTDQQAPPHQDCAC. 2 S-geranylgeranyl cysteine lipidation sites follow: Cys218 and Cys220. Cys220 carries the post-translational modification Cysteine methyl ester.

This sequence belongs to the small GTPase superfamily. Rab family. Interacts with RIMS1 and RIMS2. Interacts with Rabphilin-3A/RPH3A and Rab effector Noc2/RPH3AL. Interacts with SYTL4. Interacts with RAB3IP. Interacts with SGSM1 and SGSM3. Interacts with SYT1. Interacts with MYH9; this interaction is essential for lysosome exocytosis and plasma membrane repair. Interacts with STXBP1; this interaction promotes RAB3A dissociation from the vesicle membrane. Interacts with SNCA. Interacts with GDI1, GDI2, CHM and CHML; phosphorylation at Thr-86 disrupts these interactions. Interacts with MADD (via uDENN domain); the GTP-bound form is preferred for interaction. The cofactor is Mg(2+). Post-translationally, phosphorylation of Thr-86 in the switch II region by LRRK2 prevents the association of RAB regulatory proteins, including CHM, CHML and RAB GDP dissociation inhibitors GDI1 and GDI2. Specifically expressed in brain.

It is found in the cytoplasm. It localises to the cytosol. Its subcellular location is the lysosome. The protein resides in the cytoplasmic vesicle. The protein localises to the secretory vesicle. It is found in the cell projection. It localises to the axon. Its subcellular location is the cell membrane. The protein resides in the presynapse. The protein localises to the postsynapse. The enzyme catalyses GTP + H2O = GDP + phosphate + H(+). With respect to regulation, regulated by guanine nucleotide exchange factors (GEFs) including RAB3IL1 and MADD which promote the exchange of bound GDP for free GTP. Regulated by GTPase activating proteins (GAPs) including RAB3GAP1 and TBC1D10B which increase the GTP hydrolysis activity. Inhibited by GDP dissociation inhibitors (GDIs) which prevent Rab-GDP dissociation. Functionally, the small GTPases Rab are key regulators of intracellular membrane trafficking, from the formation of transport vesicles to their fusion with membranes. Rabs cycle between an inactive GDP-bound form and an active GTP-bound form that is able to recruit to membranes different sets of downstream effectors directly responsible for vesicle formation, movement, tethering and fusion. RAB3A plays a central role in regulated exocytosis and secretion. Controls the recruitment, tethering and docking of secretory vesicles to the plasma membrane. Upon stimulation, switches to its active GTP-bound form, cycles to vesicles and recruits effectors such as RIMS1, RIMS2, Rabphilin-3A/RPH3A, RPH3AL or SYTL4 to help the docking of vesicules onto the plasma membrane. Upon GTP hydrolysis by GTPase-activating protein, dissociates from the vesicle membrane allowing the exocytosis to proceed. Stimulates insulin secretion through interaction with RIMS2 or RPH3AL effectors in pancreatic beta cells. Regulates calcium-dependent lysosome exocytosis and plasma membrane repair (PMR) via the interaction with 2 effectors, SYTL4 and myosin-9/MYH9. Acts as a positive regulator of acrosome content secretion in sperm cells by interacting with RIMS1. Also plays a role in the regulation of dopamine release by interacting with synaptotagmin I/SYT. The sequence is that of Ras-related protein Rab-3A (RAB3A) from Bos taurus (Bovine).